The primary structure comprises 95 residues: RING finger protein Z (95 aa).

Positions 1 to 17 (MGNCNRTQKPSSSSNNL) are enriched in polar residues. The segment at 1-25 (MGNCNRTQKPSSSSNNLEKPPQAAE) is disordered. Gly-2 carries N-myristoyl glycine; by host lipidation. The RING-type; atypical zinc-finger motif lies at 40 to 76 (CKCCWFADKNLITCSDHYLCLRCHQIMLRNSELCNIC). An ASAP motif motif is present at residues 90–93 (ASAP).

This sequence belongs to the arenaviridae Z protein family. As to quaternary structure, interacts with protein NP; this interaction probably directs the encapsidated genome to budding sites. Interacts (via RING domain) with polymerase L; this interaction inhibits viral transcription and replication, Z partially blocks the product exit tunnel for the releasing nascent RNA product. Interacts with the glycoprotein complex; this interaction plays a role in virion budding. Interacts with host eIF4E; this interaction results in eIF4E reduced affinity for its substrate, the 5'-m7 G cap structure. Interacts (via late-budding domain) with host TSG101; this interaction is essential for budding and release of viral particles. Interacts with host RPLP0; this interaction may serve to load ribosome-like particles inside the virion. Interacts with host PML; this interaction induces PML bodies redistribution in the cytoplasm upon viral infection. Myristoylation is required for the role of RING finger protein Z in assembly and budding.

The protein localises to the virion. It is found in the host cytoplasm. Its subcellular location is the host perinuclear region. The protein resides in the host cell membrane. In terms of biological role, plays a crucial role in virion assembly and budding. Expressed late in the virus life cycle, it acts as an inhibitor of viral transcription and RNA synthesis by interacting with the viral polymerase L. Presumably recruits the NP encapsidated genome to cellular membranes at budding sites via direct interaction with NP. Plays critical roles in the final steps of viral release by interacting with host TSG101, a member of the vacuolar protein-sorting pathway and using other cellular host proteins involved in vesicle formation pathway. The budding of the virus progeny occurs after association of protein Z with the viral glycoprotein complex SSP-GP1-GP2 at the cell periphery, step that requires myristoylation of protein Z. Also selectively represses protein production by associating with host eIF4E. In cell-based minigenome assay, has an inhibitory effect on the ribonucleoprotein machinery (vRNP), which is responsible for the replication and transcription of the viral genome. This Tacaribe virus (strain Franze-Fernandez) (TCRV) protein is RING finger protein Z.